Consider the following 563-residue polypeptide: Arginine--tRNA ligase (563 aa).

Positions 121–131 (PNIAKPFSIGH) match the 'HIGH' region motif.

The protein belongs to the class-I aminoacyl-tRNA synthetase family. Monomer.

It localises to the cytoplasm. The enzyme catalyses tRNA(Arg) + L-arginine + ATP = L-arginyl-tRNA(Arg) + AMP + diphosphate. This Streptococcus pneumoniae (strain CGSP14) protein is Arginine--tRNA ligase.